A 430-amino-acid chain; its full sequence is UDP-N-acetylglucosamine 1-carboxyvinyltransferase 1 (430 aa).

A phosphoenolpyruvate-binding site is contributed by K22–N23. Residue R93 participates in UDP-N-acetyl-alpha-D-glucosamine binding. C117 (proton donor) is an active-site residue. C117 carries the post-translational modification 2-(S-cysteinyl)pyruvic acid O-phosphothioketal. UDP-N-acetyl-alpha-D-glucosamine is bound by residues R122–L126, D305, and V327.

Belongs to the EPSP synthase family. MurA subfamily.

Its subcellular location is the cytoplasm. It carries out the reaction phosphoenolpyruvate + UDP-N-acetyl-alpha-D-glucosamine = UDP-N-acetyl-3-O-(1-carboxyvinyl)-alpha-D-glucosamine + phosphate. It functions in the pathway cell wall biogenesis; peptidoglycan biosynthesis. In terms of biological role, cell wall formation. Adds enolpyruvyl to UDP-N-acetylglucosamine. The sequence is that of UDP-N-acetylglucosamine 1-carboxyvinyltransferase 1 from Listeria monocytogenes serotype 4b (strain F2365).